The following is a 429-amino-acid chain: Ribosomal RNA small subunit methyltransferase B (429 aa).

Residues 254 to 260 (CAAPGGK), D277, D303, and D322 each bind S-adenosyl-L-methionine. The Nucleophile role is filled by C375.

Belongs to the class I-like SAM-binding methyltransferase superfamily. RsmB/NOP family.

It is found in the cytoplasm. It carries out the reaction cytidine(967) in 16S rRNA + S-adenosyl-L-methionine = 5-methylcytidine(967) in 16S rRNA + S-adenosyl-L-homocysteine + H(+). Functionally, specifically methylates the cytosine at position 967 (m5C967) of 16S rRNA. This Escherichia fergusonii (strain ATCC 35469 / DSM 13698 / CCUG 18766 / IAM 14443 / JCM 21226 / LMG 7866 / NBRC 102419 / NCTC 12128 / CDC 0568-73) protein is Ribosomal RNA small subunit methyltransferase B.